Reading from the N-terminus, the 173-residue chain is MFIVFYLILIIFIFIYFHVYINLKIKSNSILRKFKSEVDKTIIEINQATDRNINIIEIKIESLNRIIKEVDERIEILDQRLLGFNNSSIPGNSPSSFGSKSDGIYKSNLDYSMPTIEKNIIKESYNVRNQIILLHEQGMSFEAIAKKFKLDLGEVELIISIHRGGVHEKMDRY.

A helical transmembrane segment spans residues 1-21 (MFIVFYLILIIFIFIYFHVYI).

The protein to T.pallidum TP0711.

The protein resides in the membrane. This is an uncharacterized protein from Borreliella burgdorferi (strain ATCC 35210 / DSM 4680 / CIP 102532 / B31) (Borrelia burgdorferi).